The chain runs to 546 residues: CTP synthase (546 aa).

The interval 1–269 is amidoligase domain; it reads MNPNTKIIFV…DAKLVELLNL (269 aa). Serine 16 contacts CTP. Position 16 (serine 16) interacts with UTP. ATP contacts are provided by residues 17–22 and aspartate 74; that span reads SLGKGV. The Mg(2+) site is built by aspartate 74 and glutamate 143. Residues 150–152, 190–195, and lysine 226 contribute to the CTP site; these read DIE and KTKPTQ. Residues 190–195 and lysine 226 each bind UTP; that span reads KTKPTQ. Residues 294–546 form the Glutamine amidotransferase type-1 domain; that stretch reads TIAMVGKYVS…IHAAVEKSNK (253 aa). Residue glycine 356 participates in L-glutamine binding. The active-site Nucleophile; for glutamine hydrolysis is cysteine 383. Residues 384–387, glutamate 407, and arginine 474 contribute to the L-glutamine site; that span reads LGMQ. Catalysis depends on residues histidine 519 and glutamate 521.

It belongs to the CTP synthase family. As to quaternary structure, homotetramer.

It catalyses the reaction UTP + L-glutamine + ATP + H2O = CTP + L-glutamate + ADP + phosphate + 2 H(+). It carries out the reaction L-glutamine + H2O = L-glutamate + NH4(+). The enzyme catalyses UTP + NH4(+) + ATP = CTP + ADP + phosphate + 2 H(+). It participates in pyrimidine metabolism; CTP biosynthesis via de novo pathway; CTP from UDP: step 2/2. With respect to regulation, allosterically activated by GTP, when glutamine is the substrate; GTP has no effect on the reaction when ammonia is the substrate. The allosteric effector GTP functions by stabilizing the protein conformation that binds the tetrahedral intermediate(s) formed during glutamine hydrolysis. Inhibited by the product CTP, via allosteric rather than competitive inhibition. In terms of biological role, catalyzes the ATP-dependent amination of UTP to CTP with either L-glutamine or ammonia as the source of nitrogen. Regulates intracellular CTP levels through interactions with the four ribonucleotide triphosphates. The polypeptide is CTP synthase (Francisella philomiragia subsp. philomiragia (strain ATCC 25017 / CCUG 19701 / FSC 153 / O#319-036)).